A 480-amino-acid chain; its full sequence is Lysosomal protective protein (480 aa).

The N-terminal stretch at 1 to 28 (MIRAAPPPLFLLLLLLLLLVSWASRGEA) is a signal peptide. 4 cysteine pairs are disulfide-bonded: Cys-88-Cys-362, Cys-240-Cys-256, Cys-241-Cys-246, and Cys-281-Cys-331. N-linked (GlcNAc...) asparagine glycosylation is present at Asn-145. Ser-178 is a catalytic residue. A glycan (N-linked (GlcNAc...) asparagine) is linked at Asn-333. Active-site residues include Asp-400 and His-457.

The protein belongs to the peptidase S10 family. As to quaternary structure, heterodimer of a 32 kDa chain and a 20 kDa chain; disulfide-linked.

Its subcellular location is the lysosome. It catalyses the reaction Release of a C-terminal amino acid with broad specificity.. Its function is as follows. Protective protein appears to be essential for both the activity of beta-galactosidase and neuraminidase, it associates with these enzymes and exerts a protective function necessary for their stability and activity. This protein is also a carboxypeptidase and can deamidate tachykinins. The polypeptide is Lysosomal protective protein (CTSA) (Homo sapiens (Human)).